A 318-amino-acid polypeptide reads, in one-letter code: Beta-galactosidase small subunit (318 aa).

It belongs to the bacterial beta-galactosidase small subunit family. As to quaternary structure, heterodimer of a large (LacL) and a small subunit (LacM).

It catalyses the reaction Hydrolysis of terminal non-reducing beta-D-galactose residues in beta-D-galactosides.. Component of a beta-galactosidase. The protein is Beta-galactosidase small subunit of Lactobacillus helveticus (Lactobacillus suntoryeus).